The chain runs to 135 residues: Small ribosomal subunit protein uS8 (135 aa).

Belongs to the universal ribosomal protein uS8 family. As to quaternary structure, part of the 30S ribosomal subunit. Contacts proteins S5 and S12.

Its function is as follows. One of the primary rRNA binding proteins, it binds directly to 16S rRNA central domain where it helps coordinate assembly of the platform of the 30S subunit. The sequence is that of Small ribosomal subunit protein uS8 from Cutibacterium acnes (strain DSM 16379 / KPA171202) (Propionibacterium acnes).